The sequence spans 222 residues: Large ribosomal subunit protein uL4 (222 aa).

A disordered region spans residues 50–72 (TRGRSEVSHSTKKPFRQKGTGNA).

This sequence belongs to the universal ribosomal protein uL4 family. As to quaternary structure, part of the 50S ribosomal subunit.

In terms of biological role, one of the primary rRNA binding proteins, this protein initially binds near the 5'-end of the 23S rRNA. It is important during the early stages of 50S assembly. It makes multiple contacts with different domains of the 23S rRNA in the assembled 50S subunit and ribosome. Functionally, forms part of the polypeptide exit tunnel. The chain is Large ribosomal subunit protein uL4 from Chlamydia trachomatis serovar A (strain ATCC VR-571B / DSM 19440 / HAR-13).